Here is a 65-residue protein sequence, read N- to C-terminus: Large ribosomal subunit protein bL31 (65 aa).

C16, C18, C36, and C39 together coordinate Zn(2+).

This sequence belongs to the bacterial ribosomal protein bL31 family. Type A subfamily. In terms of assembly, part of the 50S ribosomal subunit. Zn(2+) serves as cofactor.

Binds the 23S rRNA. In Brevibacillus brevis (strain 47 / JCM 6285 / NBRC 100599), this protein is Large ribosomal subunit protein bL31.